Consider the following 323-residue polypeptide: MIGTNVAPRHENWLQVVKSYYQLTKPRIIPLLLITTAAAMWIASEGRVDLFTLFITLIGGTLAAAAAQVMNCIYDRDIDYEMLRTRARPIPSGRVQSRHAFIFAVILAILSFSLFALFVNLLSGLLAMSGIVFYMLVYTHLLKRNSPQNIVIGGAAGSIPPLVGWAAVTGDLGWAPWILFAIIFLWTPPHFWALALMIKDDYAQVNVPMMPVVEGEESTVRQIWWYTLLMIPCTFLLVYPLGVSGAVYGGIAIILGAMFIQKAWQLKQAPFDQVLARSLFKFSIFYLMLLCTAMVIDSLPLTHQVMVALGDNLNLLLSLIPLN.

A run of 8 helical transmembrane segments spans residues 28 to 48, 50 to 70, 101 to 121, 122 to 142, 150 to 170, 178 to 198, 235 to 255, and 282 to 302; these read IIPL…EGRV, LFTL…AQVM, FIFA…FVNL, LSGL…THLL, IVIG…AVTG, ILFA…ALMI, FLLV…AIIL, and FSIF…LPLT.

The protein belongs to the UbiA prenyltransferase family. Protoheme IX farnesyltransferase subfamily.

The protein localises to the cell inner membrane. It carries out the reaction heme b + (2E,6E)-farnesyl diphosphate + H2O = Fe(II)-heme o + diphosphate. Its pathway is porphyrin-containing compound metabolism; heme O biosynthesis; heme O from protoheme: step 1/1. Its function is as follows. Converts heme B (protoheme IX) to heme O by substitution of the vinyl group on carbon 2 of heme B porphyrin ring with a hydroxyethyl farnesyl side group. This Rippkaea orientalis (strain PCC 8801 / RF-1) (Cyanothece sp. (strain PCC 8801)) protein is Protoheme IX farnesyltransferase.